A 528-amino-acid chain; its full sequence is Ulvan lyase, short isoform (528 aa).

The N-terminal stretch at 1–29 (MKINLSMRELVSRLSTTLKTAIALSVLTA) is a signal peptide. C30 carries the N-palmitoyl cysteine lipid modification. Residue C30 is the site of S-diacylglycerol cysteine attachment. Substrate is bound at residue 151–152 (SH). H152 acts as the Proton donor/acceptor in catalysis. Ca(2+) contacts are provided by D218, D228, and K230. Substrate-binding residues include Y309 and R326. 3 residues coordinate Ca(2+): N329, D332, and F334. H390 contributes to the substrate binding site.

This sequence belongs to the polysaccharide lyase 24 family.

The protein resides in the secreted. It localises to the cell membrane. Ulvan lyase involved in ulvan degradation. Ulvan is the main polysaccharide component of the Ulvales (green seaweed) cell wall. It is composed of disaccharide building blocks comprising 3-sulfated rhamnose (Rha3S) linked to D-glucuronic acid (GlcA), L-iduronic acid (IduA), or D-xylose (Xyl). Ulvan lyase catalyzes preferentially the endolytic cleavage of the glycosidic bond between Rha3S and the uronic acid GlcA, but not IduA, producing oligosaccharides that have unsaturated 4-deoxy-L-threo-hex-4-enopyranosiduronic acid (deltaUA) at the non-reducing end. The most abundant end products in the degradation of the ulvan polysaccharide were deltaUA-Rha3S disaccharides and deltaUA-Rha3S-IduA-Rha3S and deltaUA-Rha3S-Xyl-Rha3S tetrasaccharides. The chain is Ulvan lyase, short isoform from Alteromonas sp. (strain LOR).